Here is a 541-residue protein sequence, read N- to C-terminus: Zinc finger protein 513 (541 aa).

The segment at Met-1–Cys-120 is disordered. Residues Leu-44–Gly-55 show a composition bias toward acidic residues. A phosphoserine mark is found at Ser-85 and Ser-96. A compositionally biased stretch (basic and acidic residues) spans Glu-103–Arg-115. C2H2-type zinc fingers lie at residues Tyr-150–His-172, Phe-178–His-200, Tyr-206–His-228, Phe-360–His-382, Phe-388–His-410, Tyr-416–His-438, Phe-444–His-466, and Phe-472–His-494. Residues Lys-492 to Pro-541 are disordered.

The protein belongs to the krueppel C2H2-type zinc-finger protein family. In terms of assembly, binds DNA. Can associate with the proximal promoter regions of PAX6 and SP4, and their known targets including ARR3, RHO, OPN1MW2 and OPN1SW.

Its subcellular location is the nucleus. Transcriptional regulator that plays a role in retinal development and maintenance. This is Zinc finger protein 513 (Znf513) from Rattus norvegicus (Rat).